A 369-amino-acid polypeptide reads, in one-letter code: UPF0284 protein cce_1085 (369 aa).

Belongs to the UPF0284 family.

The protein is UPF0284 protein cce_1085 of Crocosphaera subtropica (strain ATCC 51142 / BH68) (Cyanothece sp. (strain ATCC 51142)).